The sequence spans 143 residues: uncharacterized protein (143 aa).

Residues 11–139 (EYELTTFIRR…FGELLQRMNK (129 aa)) enclose the HTH marR-type domain. Positions 53-76 (VKELAESFKLDISTLSRQAAALEA) form a DNA-binding region, H-T-H motif.

This is an uncharacterized protein from Bacillus subtilis (strain 168).